The sequence spans 347 residues: Zinc-type alcohol dehydrogenase-like protein C16A3.02c (347 aa).

It belongs to the zinc-containing alcohol dehydrogenase family. Quinone oxidoreductase subfamily.

It is found in the golgi apparatus. The protein resides in the endoplasmic reticulum. The protein is Zinc-type alcohol dehydrogenase-like protein C16A3.02c of Schizosaccharomyces pombe (strain 972 / ATCC 24843) (Fission yeast).